Reading from the N-terminus, the 249-residue chain is 2,3-bisphosphoglycerate-dependent phosphoglycerate mutase (249 aa).

Substrate-binding positions include 11–18 (RHGESEWN), 24–25 (TG), Arg-63, 90–93 (ERHY), Lys-101, and 117–118 (RR). His-12 functions as the Tele-phosphohistidine intermediate in the catalytic mechanism. Glu-90 functions as the Proton donor/acceptor in the catalytic mechanism. The disordered stretch occupies residues 119–138 (SYDTPPPPIERGSTYSQDAD). Substrate is bound at residue 184 to 185 (GN).

This sequence belongs to the phosphoglycerate mutase family. BPG-dependent PGAM subfamily.

The catalysed reaction is (2R)-2-phosphoglycerate = (2R)-3-phosphoglycerate. Its pathway is carbohydrate degradation; glycolysis; pyruvate from D-glyceraldehyde 3-phosphate: step 3/5. Catalyzes the interconversion of 2-phosphoglycerate and 3-phosphoglycerate. In Mycolicibacterium paratuberculosis (strain ATCC BAA-968 / K-10) (Mycobacterium paratuberculosis), this protein is 2,3-bisphosphoglycerate-dependent phosphoglycerate mutase.